The following is a 1299-amino-acid chain: Phosphoribosylformylglycinamidine synthase (1299 aa).

ATP-binding positions include G310 to D321, T389 to Y391, and A680. 4 residues coordinate Mg(2+): D681, E720, N724, and D888. S890 contributes to the ATP binding site. Residues V1046–G1299 form the Glutamine amidotransferase type-1 domain. C1139 functions as the Nucleophile in the catalytic mechanism. Catalysis depends on residues H1264 and E1266.

It in the N-terminal section; belongs to the FGAMS family. Monomer.

The protein resides in the cytoplasm. It catalyses the reaction N(2)-formyl-N(1)-(5-phospho-beta-D-ribosyl)glycinamide + L-glutamine + ATP + H2O = 2-formamido-N(1)-(5-O-phospho-beta-D-ribosyl)acetamidine + L-glutamate + ADP + phosphate + H(+). It functions in the pathway purine metabolism; IMP biosynthesis via de novo pathway; 5-amino-1-(5-phospho-D-ribosyl)imidazole from N(2)-formyl-N(1)-(5-phospho-D-ribosyl)glycinamide: step 1/2. In terms of biological role, phosphoribosylformylglycinamidine synthase involved in the purines biosynthetic pathway. Catalyzes the ATP-dependent conversion of formylglycinamide ribonucleotide (FGAR) and glutamine to yield formylglycinamidine ribonucleotide (FGAM) and glutamate. The chain is Phosphoribosylformylglycinamidine synthase from Myxococcus xanthus (strain DK1622).